The primary structure comprises 511 residues: Putative CBL-interacting protein kinase 13 (511 aa).

The region spanning 25–279 is the Protein kinase domain; sequence FEVGKLLGQG…AEGIMENEWF (255 aa). Residues 31–39 and K54 contribute to the ATP site; that span reads LGQGNFAKV. Residue D147 is the Proton acceptor of the active site. The interval 165 to 194 is activation loop; that stretch reads DFGLSAVADGMRRDGLFHTFCGTPAYVAPE. A disordered region spans residues 307–340; sequence VDAPTSPPDTPRTVDSGDVGAAPTRPRKAGSLTS. One can recognise an NAF domain in the interval 321–383; it reads DSGDVGAAPT…PGFDLSGLFD (63 aa). The PPI stretch occupies residues 400–429; the sequence is KHTARFVSAAPVEVIVATLEAAAAAAGMAV.

The protein belongs to the protein kinase superfamily. CAMK Ser/Thr protein kinase family. SNF1 subfamily. Mn(2+) is required as a cofactor.

The catalysed reaction is L-seryl-[protein] + ATP = O-phospho-L-seryl-[protein] + ADP + H(+). It catalyses the reaction L-threonyl-[protein] + ATP = O-phospho-L-threonyl-[protein] + ADP + H(+). Functionally, CIPK serine-threonine protein kinases interact with CBL proteins. Binding of a CBL protein to the regulatory NAF domain of CIPK protein lead to the activation of the kinase in a calcium-dependent manner. The polypeptide is Putative CBL-interacting protein kinase 13 (CIPK13) (Oryza sativa subsp. japonica (Rice)).